Consider the following 1114-residue polypeptide: Extracellular sulfatase SULF-1 homolog (1114 aa).

The first 25 residues, 1–25 (MMRHSSLRLIIGGLILLLFVLNVFS), serve as a signal peptide directing secretion. The Ca(2+) site is built by D62, D63, and C98. C98 acts as the Nucleophile in catalysis. C98 bears the 3-oxoalanine (Cys) mark. N122, N159, N181, N208, and N251 each carry an N-linked (GlcNAc...) asparagine glycan. 2 residues coordinate Ca(2+): D327 and H328. N-linked (GlcNAc...) asparagine glycosylation occurs at N447. The segment covering 466–479 (SSSSTAATLMSSTA) has biased composition (low complexity). Residues 466 to 504 (SSSSTAATLMSSTAQQPEDGEEEVETDNEEDDVDGDGAM) are disordered. Residues 483-502 (EDGEEEVETDNEEDDVDGDG) show a composition bias toward acidic residues. 3 N-linked (GlcNAc...) asparagine glycosylation sites follow: N683, N713, and N743. Positions 781–812 (KQLRESNKQALAAGRRNDNRRRNDQSVLDSGA) are disordered. The span at 795–804 (RRNDNRRRND) shows a compositional bias: basic and acidic residues. N-linked (GlcNAc...) asparagine glycosylation is present at N817. The segment covering 876 to 895 (ADSKEMAREARRKLKEERQR) has biased composition (basic and acidic residues). A disordered region spans residues 876–901 (ADSKEMAREARRKLKEERQRKKERKR). N945, N955, and N974 each carry an N-linked (GlcNAc...) asparagine glycan. Residues 1073–1114 (LSKYNRLTGSQQSHMKRRPWKQTPLQQSPRFLRTHSVTPAQA) are disordered. The span at 1095–1114 (TPLQQSPRFLRTHSVTPAQA) shows a compositional bias: polar residues.

It belongs to the sulfatase family. The cofactor is Ca(2+). Post-translationally, the conversion to 3-oxoalanine (also known as C-formylglycine, FGly), of a serine or cysteine residue in prokaryotes and of a cysteine residue in eukaryotes, is critical for catalytic activity.

The protein localises to the endoplasmic reticulum. The protein resides in the golgi apparatus. It localises to the golgi stack. Its subcellular location is the cell surface. In Drosophila melanogaster (Fruit fly), this protein is Extracellular sulfatase SULF-1 homolog (Sulf1).